Here is a 286-residue protein sequence, read N- to C-terminus: Carbohydrate-binding domain-containing protein Cthe_2159 (286 aa).

The N-terminal stretch at 1 to 20 (MSIKKLILAASILTTLALTG) is a signal peptide. The N-palmitoyl cysteine moiety is linked to residue Cys-21. Cys-21 carries S-diacylglycerol cysteine lipidation. The polygalacturonic acid-binding stretch occupies residues 124–225 (GKDNVLTDAE…GIKVENTEEP (102 aa)). Arg-152, Asp-153, Asp-154, Asn-177, Asp-178, Asp-215, Asp-243, Asp-244, and Asp-247 together coordinate Ca(2+).

Monomer.

It localises to the cell membrane. Binds cellulosic and pectic substrates. Displays no enzyme activity (in vitro). This is Carbohydrate-binding domain-containing protein Cthe_2159 from Acetivibrio thermocellus (strain ATCC 27405 / DSM 1237 / JCM 9322 / NBRC 103400 / NCIMB 10682 / NRRL B-4536 / VPI 7372) (Clostridium thermocellum).